Consider the following 94-residue polypeptide: ATP synthase subunit c (94 aa).

The next 2 membrane-spanning stretches (helical) occupy residues 15–35 (VSVG…WGLI) and 61–81 (GGLM…FIFA).

The protein belongs to the ATPase C chain family. In terms of assembly, F-type ATPases have 2 components, F(1) - the catalytic core - and F(0) - the membrane proton channel. F(1) has five subunits: alpha(3), beta(3), gamma(1), delta(1), epsilon(1). F(0) has three main subunits: a(1), b(2) and c(10-14). The alpha and beta chains form an alternating ring which encloses part of the gamma chain. F(1) is attached to F(0) by a central stalk formed by the gamma and epsilon chains, while a peripheral stalk is formed by the delta and b chains.

The protein resides in the cell inner membrane. Its function is as follows. F(1)F(0) ATP synthase produces ATP from ADP in the presence of a proton or sodium gradient. F-type ATPases consist of two structural domains, F(1) containing the extramembraneous catalytic core and F(0) containing the membrane proton channel, linked together by a central stalk and a peripheral stalk. During catalysis, ATP synthesis in the catalytic domain of F(1) is coupled via a rotary mechanism of the central stalk subunits to proton translocation. Key component of the F(0) channel; it plays a direct role in translocation across the membrane. A homomeric c-ring of between 10-14 subunits forms the central stalk rotor element with the F(1) delta and epsilon subunits. The protein is ATP synthase subunit c of Nitrosococcus oceani (strain ATCC 19707 / BCRC 17464 / JCM 30415 / NCIMB 11848 / C-107).